Reading from the N-terminus, the 1726-residue chain is Protein NLRC5 (1726 aa).

Residues 207 to 537 form the NACHT domain; sequence RVVMLSGQAG…THLTIQEFMA (331 aa). 213–220 is a binding site for ATP; the sequence is GQAGSGKT. 18 LRR repeats span residues 879-902, 904-925, 1002-1025, 1026-1048, 1103-1126, 1128-1155, 1212-1235, 1351-1374, 1387-1411, 1421-1443, 1447-1468, 1502-1525, 1532-1553, 1560-1580, 1588-1609, 1616-1637, 1642-1662, and 1670-1691; these read LTVLNLSHNALGNRGLKKLLEHLP, LDTIQEINVSDNGVDMDGVVLL, NLDFSHGTLKDESTEKLLKFLPNM, ASLNLLNLSHIQMSTDSALLLVQ, CHHLTDLDLSSNFLKDEDVKTFVQ, LPKLQISGSVSLNNNNLTEVGVLYLLSL, LNSVQTLELRNNSFSADTIKYLIT, AEFLSSVLPSLKNLKILSLSSKGE, AQKHLEQLSLAHHVIKDRGAAVLGN, SLSLLKCLDWTATGGRDLVRGLV, SLEEIRLDSIELDEESIDCFAQ, LIELEEIELIGLRMGDRGVEELVK, RLRKINLSENRVSDHAGEMLVK, ALQQIHLFRNNLGHSSAAVLG, ELTELDLSENQMESKGCSSVCE, ALKKLHLTSIGTSDLVNVASCL, SIEDISLSWNNCENDVVLKLA, and KLKRLDLEANNINTSGAMALAT.

Belongs to the NLRP family.

It is found in the cytoplasm. Functionally, probable regulator of the NF-kappa-B and type I interferon signaling pathways. May also regulate the type II interferon signaling pathway. Plays a role in homeostatic control of innate immunity and in antiviral defense mechanisms. This Ictalurus punctatus (Channel catfish) protein is Protein NLRC5 (nlrc5).